The chain runs to 125 residues: Synaptobrevin (125 aa).

Residues 1–46 (MSGPQNPQAGPGGPPSGPPQPGGPPGPPQGPPQPVQQSKRLQQTQA) are disordered. Topologically, residues 1 to 103 (MSGPQNPQAG…KRKFWWKNCK (103 aa)) are cytoplasmic. A compositionally biased stretch (pro residues) spans 12-34 (GGPPSGPPQPGGPPGPPQGPPQP). Positions 40–100 (RLQQTQAQVE…GKLKRKFWWK (61 aa)) constitute a v-SNARE coiled-coil homology domain. A helical; Anchor for type IV membrane protein transmembrane segment spans residues 104–123 (MMIILGGIVAVIVTVIIVWA). At 124-125 (AT) the chain is on the vesicular side.

It belongs to the synaptobrevin family.

The protein localises to the cytoplasmic vesicle. It localises to the secretory vesicle. The protein resides in the synaptic vesicle membrane. Its subcellular location is the synapse. It is found in the synaptosome. Functionally, intrinsic membrane protein of small synaptic vesicles. In Doryteuthis pealeii (Longfin inshore squid), this protein is Synaptobrevin.